A 48-amino-acid polypeptide reads, in one-letter code: Sperm protamine R3 isoform 1 (48 aa).

Positions 1 to 29 (ARRRHSMKKKRKSVRRRKTRKNQRKRKNS) are enriched in basic residues. A disordered region spans residues 1–48 (ARRRHSMKKKRKSVRRRKTRKNQRKRKNSLGRSFKQHGFLKQPPRFRP).

In terms of tissue distribution, testis.

The protein localises to the nucleus. The protein resides in the chromosome. Protamines substitute for histones in the chromatin of sperm during the haploid phase of spermatogenesis. They compact sperm DNA into a highly condensed, stable and inactive complex. The chain is Sperm protamine R3 isoform 1 from Hydrolagus colliei (Spotted ratfish).